The chain runs to 316 residues: Pantothenate kinase (316 aa).

95–102 contacts ATP; that stretch reads GSVAVGKS.

Belongs to the prokaryotic pantothenate kinase family.

The protein resides in the cytoplasm. It catalyses the reaction (R)-pantothenate + ATP = (R)-4'-phosphopantothenate + ADP + H(+). It participates in cofactor biosynthesis; coenzyme A biosynthesis; CoA from (R)-pantothenate: step 1/5. This Shigella sonnei (strain Ss046) protein is Pantothenate kinase.